We begin with the raw amino-acid sequence, 370 residues long: 3-isopropylmalate dehydrogenase (370 aa).

77–90 contributes to the NAD(+) binding site; that stretch reads GPKWDSVPYEVRPE. Residues Arg-97, Arg-107, Arg-135, and Asp-226 each coordinate substrate. Asp-226, Asp-250, and Asp-254 together coordinate Mg(2+). 290–302 is a binding site for NAD(+); sequence GSAPDIAGKGIAN.

It belongs to the isocitrate and isopropylmalate dehydrogenases family. LeuB type 1 subfamily. Homodimer. It depends on Mg(2+) as a cofactor. Mn(2+) serves as cofactor.

It localises to the cytoplasm. The catalysed reaction is (2R,3S)-3-isopropylmalate + NAD(+) = 4-methyl-2-oxopentanoate + CO2 + NADH. It participates in amino-acid biosynthesis; L-leucine biosynthesis; L-leucine from 3-methyl-2-oxobutanoate: step 3/4. Functionally, catalyzes the oxidation of 3-carboxy-2-hydroxy-4-methylpentanoate (3-isopropylmalate) to 3-carboxy-4-methyl-2-oxopentanoate. The product decarboxylates to 4-methyl-2 oxopentanoate. This is 3-isopropylmalate dehydrogenase from Brucella melitensis biotype 1 (strain ATCC 23456 / CCUG 17765 / NCTC 10094 / 16M).